A 231-amino-acid chain; its full sequence is PX domain-containing protein 1 (231 aa).

One can recognise a PX domain in the interval methionine 1–glutamine 134.

The protein is PX domain-containing protein 1 (PXDC1) of Bos taurus (Bovine).